A 191-amino-acid polypeptide reads, in one-letter code: MPDARPPCSILILAGGRGQRMGGRDKGLVDWRGEPLIAHVHRVVRPLSDDLVISCNRNQADYRAYADRLVGDAEADFPGPLAGVIAGLKVARHGWVVVLACDAPLVDRELIEGLLRLAVAGNSAAMVRQGGFWQPMFSVLPKRVLPALEQAWAAGERSLQKALLREAVQGLECAESDRRLSNFNSPERLQD.

GTP-binding positions include 13–15 (LAG), K26, D72, and D102. Residue D102 coordinates Mg(2+).

It belongs to the MobA family. As to quaternary structure, monomer. Mg(2+) is required as a cofactor.

The protein resides in the cytoplasm. The enzyme catalyses Mo-molybdopterin + GTP + H(+) = Mo-molybdopterin guanine dinucleotide + diphosphate. Transfers a GMP moiety from GTP to Mo-molybdopterin (Mo-MPT) cofactor (Moco or molybdenum cofactor) to form Mo-molybdopterin guanine dinucleotide (Mo-MGD) cofactor. The chain is Molybdenum cofactor guanylyltransferase from Pseudomonas putida (strain ATCC 700007 / DSM 6899 / JCM 31910 / BCRC 17059 / LMG 24140 / F1).